A 152-amino-acid polypeptide reads, in one-letter code: Adenosine 5'-monophosphoramidase HNT1 (152 aa).

Positions isoleucine 8–leucine 119 constitute an HIT domain. AMP contacts are provided by residues aspartate 33–isoleucine 34, asparagine 93, histidine 99–valine 101, and histidine 106–histidine 108. The Histidine triad motif motif lies at histidine 104–histidine 108. The active-site Tele-AMP-histidine intermediate is the histidine 106.

Belongs to the HINT family. In terms of assembly, homodimer. Mg(2+) serves as cofactor.

The enzyme catalyses adenosine 5'-phosphoramidate + H2O = AMP + NH4(+). Hydrolyzes adenosine 5'-monophosphoramidate substrates such as AMP-morpholidate, AMP-N-alanine methyl ester, AMP-alpha-acetyl lysine methyl ester and AMP-NH2. The sequence is that of Adenosine 5'-monophosphoramidase HNT1 from Candida albicans (strain SC5314 / ATCC MYA-2876) (Yeast).